The chain runs to 727 residues: Prolyl endopeptidase-like (727 aa).

Catalysis depends on charge relay system residues S559, D645, and H690.

The protein belongs to the peptidase S9A family. Homodimer. Interacts with the AP-1 complex.

Its subcellular location is the cytoplasm. The protein localises to the cytosol. It localises to the golgi apparatus. It is found in the trans-Golgi network. The protein resides in the cytoskeleton. Its subcellular location is the nucleus. Its function is as follows. Serine peptidase whose precise substrate specificity remains unclear. Does not cleave peptides after a arginine or lysine residue. Regulates trans-Golgi network morphology and sorting by regulating the membrane binding of the AP-1 complex. May play a role in the regulation of synaptic vesicle exocytosis. The chain is Prolyl endopeptidase-like (PREPL) from Macaca fascicularis (Crab-eating macaque).